We begin with the raw amino-acid sequence, 209 residues long: MTELDINEIEAYNSNKMGWIELITGCMFAGKTEEFIRRLRVLSYAKKRVLAFKPSIDNRYSVENIISHSGSKLDSYLVHSSDEIKQIIEKENQIQQVDVIGIDEVQFFDEQVVELIEQLANQGIIVIVNGLDKDFRCLPFKNVDKLLVTAEFVTKLRARCHLCGNFANRSQKIVNGQPALWDSPLILVDGKESYEARCRNCFIVPKKEV.

Residues 25–32 (GCMFAGKT) and 103–106 (DEVQ) each bind ATP. The active-site Proton acceptor is Glu104. Zn(2+) contacts are provided by Cys160, Cys163, Cys198, and Cys201.

This sequence belongs to the thymidine kinase family. In terms of assembly, homotetramer.

Its subcellular location is the cytoplasm. It catalyses the reaction thymidine + ATP = dTMP + ADP + H(+). The chain is Thymidine kinase from Mycoplasma mycoides subsp. mycoides SC (strain CCUG 32753 / NCTC 10114 / PG1).